Reading from the N-terminus, the 75-residue chain is Dermaseptin-SP5 (75 aa).

The signal sequence occupies residues 1 to 22 (MAFLKKSLFLVLFLGLVSLSMC). Residues 23–45 (EEEKRENEVEEEQEDDEQSELRR) constitute a propeptide that is removed on maturation. A disordered region spans residues 26-46 (KRENEVEEEQEDDEQSELRRS). The segment covering 30-40 (EVEEEQEDDEQ) has biased composition (acidic residues). Residue proline 72 is modified to Proline amide. Residues 74–75 (EQ) constitute a propeptide that is removed on maturation.

Belongs to the frog skin active peptide (FSAP) family. Dermaseptin subfamily. Expressed by the skin glands.

It is found in the secreted. The protein localises to the target cell membrane. Its function is as follows. Antimicrobial peptide with weak activity against Gram-positive and Gram-negative bacteria and fungi. Has been tested against E.coli (MIC=96.06-256 uM), S.aureus (MIC&gt;192.12 uM), K.pneumoniae (MIC&gt;189.00 uM) and C.albicans (MIC=384.24-1024 uM). Probably acts by disturbing membrane functions with its alpha-helical amphipathic structure. May penetrate bacterial membranes, but stay at the mammalian membrane surface. Does not show hemolytic activity. Does not interact at all with cardiolipin. The protein is Dermaseptin-SP5 of Agalychnis spurrelli (Gliding leaf frog).